A 676-amino-acid polypeptide reads, in one-letter code: Cysteine-rich receptor-like protein kinase 8 (676 aa).

Positions 1 to 34 are cleaved as a signal peptide; that stretch reads MYIVSMFGLAGLEALICFIFLFLFSFLTSFKASA. The Extracellular segment spans residues 35–291; that stretch reads QNPFYLNHDC…IPGKSGNSTV (257 aa). 2 Gnk2-homologous domains span residues 38–142 and 151–255; these read FYLN…HKNF and ELIM…LYAF. 8 N-linked (GlcNAc...) asparagine glycosylation sites follow: Asn-46, Asn-53, Asn-71, Asn-114, Asn-159, Asn-187, Asn-257, and Asn-288. A helical transmembrane segment spans residues 292 to 312; it reads LVVAIVVLAVLLFIALVGYCF. Over 313 to 676 the chain is Cytoplasmic; sequence LAQRTKKTFD…DELITDLYPR (364 aa). The 287-residue stretch at 353 to 639 folds into the Protein kinase domain; sequence FAESNKIGRG…TLPVPRQPGF (287 aa). ATP is bound by residues 359–367 and Lys-381; that span reads IGRGGFGEV. Tyr-426 carries the phosphotyrosine modification. Asp-478 functions as the Proton acceptor in the catalytic mechanism. Ser-482 is subject to Phosphoserine. Thr-518 carries the phosphothreonine modification. Phosphotyrosine is present on Tyr-526. Positions 640-666 are disordered; the sequence is FIQSSPVKDPTDSDQSTTTKSTPASID. The segment covering 652–662 has biased composition (low complexity); that stretch reads SDQSTTTKSTP.

It belongs to the protein kinase superfamily. Ser/Thr protein kinase family. CRK subfamily.

The protein localises to the membrane. The enzyme catalyses L-seryl-[protein] + ATP = O-phospho-L-seryl-[protein] + ADP + H(+). It catalyses the reaction L-threonyl-[protein] + ATP = O-phospho-L-threonyl-[protein] + ADP + H(+). This is Cysteine-rich receptor-like protein kinase 8 (CRK8) from Arabidopsis thaliana (Mouse-ear cress).